A 125-amino-acid chain; its full sequence is MPTIQQLVRAQRKRIVKKTKSPALCACPQRRGVCTRVYTTTPKKPNSALRKVARVRLSSGFEVTAYIPGIGHNLQEHSVVLIRGGRVKDLPGVRYHIVRGTLDTAGVKERKQSRSKYGVKRVTKK.

It belongs to the universal ribosomal protein uS12 family. As to quaternary structure, part of the 30S ribosomal subunit.

The protein resides in the plastid. Its subcellular location is the chloroplast. In terms of biological role, with S4 and S5 plays an important role in translational accuracy. Located at the interface of the 30S and 50S subunits. This chain is Small ribosomal subunit protein uS12c (rps12), found in Nephroselmis olivacea (Green alga).